Reading from the N-terminus, the 415-residue chain is Serine/threonine transporter SstT (415 aa).

Transmembrane regions (helical) follow at residues 21–41 (ILLG…AALA), 45–65 (LGTL…LVLV), 85–105 (FLYL…SVLF), 142–162 (ALLN…GIAF), 193–213 (LGIF…ALWG), 217–237 (LLMV…PLIV), 289–309 (VAIP…ITVL), and 331–351 (VVAS…LLLI).

This sequence belongs to the dicarboxylate/amino acid:cation symporter (DAACS) (TC 2.A.23) family.

The protein resides in the cell inner membrane. The enzyme catalyses L-serine(in) + Na(+)(in) = L-serine(out) + Na(+)(out). The catalysed reaction is L-threonine(in) + Na(+)(in) = L-threonine(out) + Na(+)(out). Functionally, involved in the import of serine and threonine into the cell, with the concomitant import of sodium (symport system). In Pectobacterium atrosepticum (strain SCRI 1043 / ATCC BAA-672) (Erwinia carotovora subsp. atroseptica), this protein is Serine/threonine transporter SstT.